A 3462-amino-acid chain; its full sequence is MVQQSTTVAEAQGNEQKANNVDAAMDKLRQSIADNATTKQNQNYTDASQNKKDAYNNAVTTAQGIIDQTTSPTLDPTVINQAAGQVSTTKNALNGNENLEAAKQQASQSLGSLDNLNNAQKQTVTDQINGAHTVDEANQIKQNAQNLNTAMGNLKQAIADKDATKATVNFTDADQAKQQAYNTAVTNAENIISKANGGNATQAEVEQAIKQVNAAKQALNGNANVQHAKDEATALINSSNDLNQAQKDALKQQVQNATTVAGVNNVKQTAQELNNAMTQLKQGIADKEQTKADGNFVNADPDKQNAYNQAVAKAEALISATPDVVVTPSEITAALNKVTQAKNDLNGNTNLATAKQNVQHAIDQLPNLNQAQRDEYSKQITQATLVPNVNAIQQAATTLNDAMTQLKQGIANKAQIKGSENYHDADTDKQTAYDNAVTKAEELLKQTTNPTMDPNTIQQALTKVNDTNQALNGNQKLADAKQDAKTTLGTLDHLNDAQKQALTTQVEQAPDIATVNNVKQNAQNLNNAMTNLNNALQDKTETLNSINFTDADQAKKDAYTNAVSHAEGILSKANGSNASQTEVEQAMQRVNEAKQALNGNDNVQRAKDAAKQVITNANDLNQAQKDALKQQVDAAQTVANVNTIKQTAQDLNQAMTQLKQGIADKDQTKASGNFVNADTDKQNAYNNAVAHAEQIISGTPNANVDPQQVAQALQQVNQAKGDLNGNHNLQVAKDNANTAIDQLPNLNQPQKTALKDQVSHAELVTGVNAIKQNADALNNAMGTLKQQIQANSQVPQSVDFTQADQDKQQAYNNAANQAQQIANGIPTPVLTPDTVTQAVTTMNQAKDALNGDEKLAQAKQEALANLDTLRDLNQPQRDALRNQINQAQALATVEQTKQNAQNVNTAMSNLKQGIANKDTVKASENYHDADADKQTAYTNAVSQAEGIINQTTNPTLNPDEITRALTQVTDAKNGLNGEAKLATEKQNAKDAVSGMTHLNDAQKQALKGQIDQSPEIATVNQVKQTATSLDQAMDQLSQAINDKAQTLADGNYLNADPDKQNAYKQAVAKAEALLNKQSGTNEVQAQVESITNEVNAAKQALNGNDNLANAKQQAKQQLANLTHLNDAQKQSFESQITQAPLVTDVTTINQKAQTLDHAMELLRNSVADNQTTLASEDYHDATAQRQNDYNQAVTAANNIINQTTSPTMNPDDVNGATTQVNNTKVALDGDENLAAAKQQANNRLDQLDHLNNAQKQQLQSQITQSSDIAAVNGHKQTAESLNTAMGNLINAIADHQAVEQRGNFINADTDKQTAYNTAVNEAAAMINKQTGQNANQTEVEQAITKVQTTLQALNGDHNLQVAKTNATQAIDALTSLNDPQKTALKDQVTAATLVTAVHQIEQNANTLNQAMHGLRQSIQDNAATKANSKYINEDQPEQQNYDQAVQAANNIINEQTATLDNNAINQAATTVNTTKAALHGDVKLQNDKDHAKQTVSQLAHLNNAQKHMEDTLIDSETTRTAVKQDLTEAQALDQLMDALQQSIADKDATRASSAYVNAEPNKKQSYDEAVQNAESIIAGLNNPTINKGNVSSATQAVISSKNALDGVERLAQDKQTAGNSLNHLDQLTPAQQQALENQINNATTRGEVAQKLTEAQALNQAMEALRNSIQDQQQTEAGSKFINEDKPQKDAYQAAVQNAKDLINQTNNPTLDKAQVEQLTQAVNQAKDNLHGDQKLADDKQHAVTDLNQLNGLNNPQRQALESQINNAATRGEVAQKLAEAKALDQAMQALRNSIQDQQQTESGSKFINEDKPQKDAYQAAVQNAKDLINQTGNPTLDKSQVEQLTQAVTTAKDNLHGDQKLARDQQQAVTTVNALPNLNHAQQQALTDAINAAPTRTEVAQHVQTATELDHAMETLKNKVDQVNTDKAQPNYTEASTDKKEAVDQALQAAESITDPTNGSNANKDAVDQVLTKLQEKENELNGNERVAEAKTQAKQTIDQLTHLNADQIATAKQNIDQATKLQPIAELVDQATQLNQSMDQLQQAVNEHANVEQTVDYTQADSDKQNAYKQAIADAENVLKQNANKQQVDQALQNILNAKQALNGDERVALAKTNGKHDIDQLNALNNAQQDGFKGRIDQSNDLNQIQQIVDEAKALNRAMDQLSQEITDNEGRTKGSTNYVNADTQVKQVYDETVDKAKQALDKSTGQNLTAKQVIKLNDAVTAAKKALNGEERLNNRKAEALQRLDQLTHLNNAQRQLAIQQINNAETLNKASRAINRATKLDNAMGAVQQYIDEQHLGVISSTNYINADDNLKANYDNAIANAAHELDKVQGNAIAKAEAEQLKQNIIDAQNALNGDQNLANAKDKANAFVNSLNGLNQQQQDLAHKAINNADTVSDVTDIVNNQIDLNDAMETLKHLVDNEIPNAEQTVNYQNADDNAKTNFDDAKRLANTLLNSDNTNVNDINGAIQAVNDAIHNLNGDQRLQDAKDKAIQSINQALANKLKEIEASNATDQDKLIAKNKAEELANSIINNINKATSNQAVSQVQTAGNHAIEQVHANEIPKAKIDANKDVDKQVQALIDEIDRNPNLTDKEKQALKDRINQILQQGHNGINNAMTKEEIEQAKAQLAQALQDIKDLVKAKEDAKQDVDKQVQALIDEIDQNPNLTDKEKQALKDRINQILQQGHNDINNAMTKEAIEQAKERLAQALQDIKDLVKAKEDAKNDIDKRVQALIDEIDQNPNLTDKEKQALKDRINQILQQGHNDINNALTKEEIEQAKAQLAQALQDIKDLVKAKEDAKNAIKALANAKRDQINSNPDLTPEQKAKALKEIDEAEKRALQNVENAQTIDQLNRGLNLGLDDIRNTHVWEVDEQPAVNEIFEATPEQILVNGELIVHRDDIITEQDILAHINLIDQLSAEVIDTPSTATISDSLTAKVEVTLLDGSKVIVNVPVKVVEKELSVVKQQAIESIENAAQQKINEINNSVTLTLEQKEAAIAEVNKLKQQAIDHVNNAPDVHSVEEIQQQEQAHIEQFNPEQFTIEQAKSNAIKSIEDAIQHMIDEIKARTDLTDKEKQEAIAKLNQLKEQAIQAIQRAQSIDEISEQLEQFKAQMKAANPTAKELAKRKQEAISRIKDFSNEKINSIRNSEIGTADEKQAAMNQINEIVLETIRDINNAHTLQQVEAALNNGIARISAVQIVTSDRAKQSSSTGNESNSHLTIGYGTANHPFNSSTIGHKKKLDEDDDIDPLHMRHFSNNFGNVIKNAIGVVGISGLLASFWFFIAKRRRKEDEEEELEIRDNNKDSIKETLDDTKHLPLLFAKRRRKEDEEDVTVEEKDSLNNGESLDKVKHTPFFLPKRRRKEDEEDVEVTNENTDEKVLKDNEHSPLLFAKRRKDKEEDVETTTSIESKDEDVPLLLAKKKNQKDNQSKDKKSASKNTSKKVAAKKKKKKAKKNKK.

The segment covering 1–19 has biased composition (polar residues); it reads MVQQSTTVAEAQGNEQKAN. A disordered region spans residues 1 to 21; the sequence is MVQQSTTVAEAQGNEQKANNV. FIVAR domains are found at residues 24-82, 150-208, 276-334, 402-460, 528-586, 654-712, 780-838, 906-964, 1032-1093, 1158-1216, 1284-1342, 1410-1467, 1535-1593, 1661-1719, 1787-1845, 1913-1971, 2039-2093, 2161-2220, and 2415-2471; these read AMDK…INQA, AMGN…VEQA, AMTQ…ITAA, AMTQ…IQQA, AMTN…VEQA, AMTQ…VAQA, AMGT…VTQA, AMSN…ITRA, AMDQ…ITNE, AMEL…VNGA, AMHG…INQA, LMDA…VSSA, AMEA…VEQL, AMQA…VEQL, AMET…VDQV, SMDQ…VDQA, AMDQ…VIKL, and AMET…INGA. The chain crosses the membrane as a helical span at residues 3267–3289; it reads VIKNAIGVVGISGLLASFWFFIA. Positions 3365–3462 are disordered; that stretch reads RRKEDEEDVE…KKKKAKKNKK (98 aa). Basic and acidic residues-rich tracts occupy residues 3380–3390 and 3429–3439; these read TDEKVLKDNEH and QKDNQSKDKKS. The span at 3444-3462 shows a compositional bias: basic residues; the sequence is TSKKVAAKKKKKKAKKNKK.

It localises to the cell membrane. The protein is Extracellular matrix-binding protein EbhA (ebhA) of Staphylococcus aureus (strain Newman).